The sequence spans 520 residues: ATP-dependent clpX-like chaperone, mitochondrial (520 aa).

The N-terminal 13 residues, 1–13 (MLKSASQNFFRAY), are a transit peptide targeting the mitochondrion. Residue 140–147 (GPSGSGKT) coordinates ATP.

It belongs to the ClpX chaperone family. As to quaternary structure, homohexamer that forms a ring structure; this hexamerization requires ATP binding. Interacts with HEM1.

It localises to the mitochondrion inner membrane. Functionally, ATP-dependent unfoldase that stimulates the incorporation of the pyridoxal phosphate cofactor into 5-aminolevulinate synthase (HEM1), thereby activating 5-aminolevulinate (ALA) synthesis, the first step in heme biosynthesis. Up-regulates heme biosynthesis. This Saccharomyces cerevisiae (strain ATCC 204508 / S288c) (Baker's yeast) protein is ATP-dependent clpX-like chaperone, mitochondrial.